The primary structure comprises 440 residues: uncharacterized protein (440 aa).

10 helical membrane-spanning segments follow: residues 1–21, 29–49, 70–90, 101–121, 179–199, 226–246, 258–278, 343–363, 366–386, and 389–409; these read MLLV…QLYR, TVFI…SAFE, LLQM…IARI, VGVL…GIAM, TSII…LSLG, FVIR…AATS, IVAS…LLFF, IYPA…PFSF, ILTL…VGGG, and FAAI…GLLI.

It belongs to the dicarboxylate/amino acid:cation symporter (DAACS) (TC 2.A.23) family.

It localises to the cell membrane. This is an uncharacterized protein from Haemophilus influenzae (strain ATCC 51907 / DSM 11121 / KW20 / Rd).